The following is a 245-amino-acid chain: Ribosomal RNA small subunit methyltransferase J (245 aa).

S-adenosyl-L-methionine is bound by residues 94-95, 110-111, and D164; these read RD and ER.

The protein belongs to the methyltransferase superfamily. RsmJ family.

It localises to the cytoplasm. It carries out the reaction guanosine(1516) in 16S rRNA + S-adenosyl-L-methionine = N(2)-methylguanosine(1516) in 16S rRNA + S-adenosyl-L-homocysteine + H(+). Functionally, specifically methylates the guanosine in position 1516 of 16S rRNA. In Dechloromonas aromatica (strain RCB), this protein is Ribosomal RNA small subunit methyltransferase J.